The sequence spans 120 residues: Large ribosomal subunit protein uL18 (120 aa).

This sequence belongs to the universal ribosomal protein uL18 family. As to quaternary structure, part of the 50S ribosomal subunit; part of the 5S rRNA/L5/L18/L25 subcomplex. Contacts the 5S and 23S rRNAs.

In terms of biological role, this is one of the proteins that bind and probably mediate the attachment of the 5S RNA into the large ribosomal subunit, where it forms part of the central protuberance. In Clostridium botulinum (strain Eklund 17B / Type B), this protein is Large ribosomal subunit protein uL18.